We begin with the raw amino-acid sequence, 226 residues long: 7-cyano-7-deazaguanine synthase (226 aa).

Residue 10-20 participates in ATP binding; sequence LSGGLDSATAA. Positions 191, 199, 202, and 205 each coordinate Zn(2+).

Belongs to the QueC family. It depends on Zn(2+) as a cofactor.

The enzyme catalyses 7-carboxy-7-deazaguanine + NH4(+) + ATP = 7-cyano-7-deazaguanine + ADP + phosphate + H2O + H(+). The protein operates within purine metabolism; 7-cyano-7-deazaguanine biosynthesis. In terms of biological role, catalyzes the ATP-dependent conversion of 7-carboxy-7-deazaguanine (CDG) to 7-cyano-7-deazaguanine (preQ(0)). The polypeptide is 7-cyano-7-deazaguanine synthase (Prochlorococcus marinus (strain MIT 9303)).